The sequence spans 541 residues: Tripeptidyl aminopeptidase (541 aa).

The N-terminal stretch at Met-1–Ala-36 is a signal peptide. Positions Ala-37–Ala-39 are excised as a propeptide. The region spanning Gly-123–Gly-501 is the AB hydrolase-1 domain. Catalysis depends on Ser-249, which acts as the Nucleophile. Asp-474 is an active-site residue. His-503 serves as the catalytic Proton donor.

It belongs to the peptidase S33 family.

The protein localises to the secreted. Functionally, cleaves tripeptides from the N-termini of proteins. Does not cleave mono- or dipeptides, or N-terminally blocked peptides. The polypeptide is Tripeptidyl aminopeptidase (Streptomyces coelicolor (strain ATCC BAA-471 / A3(2) / M145)).